The sequence spans 900 residues: E3 ubiquitin-protein ligase BRE1-like 2 (900 aa).

Residues 1–31 (MENQESDEPMQKKPHLLDSVSPNSMARNSSP) form a disordered region. Positions 20–31 (VSPNSMARNSSP) are enriched in polar residues. 4 coiled-coil regions span residues 63 to 96 (TVLQ…LQLN), 217 to 300 (EDAT…KDAA), 437 to 660 (SRIE…AEME), and 706 to 737 (SEKQ…EQMK). The RING-type zinc-finger motif lies at 848–887 (CGVCFDRPKEVVIVKCYHLFCQQCIQRSLEIRHRKCPGCG).

This sequence belongs to the BRE1 family. As to quaternary structure, may act as a tetramer consisting of two copies of HUB1 and two copies of HUB2. In terms of tissue distribution, ubiquitously expressed.

It localises to the nucleus. It carries out the reaction S-ubiquitinyl-[E2 ubiquitin-conjugating enzyme]-L-cysteine + [acceptor protein]-L-lysine = [E2 ubiquitin-conjugating enzyme]-L-cysteine + N(6)-ubiquitinyl-[acceptor protein]-L-lysine.. The protein operates within protein modification; protein ubiquitination. E3 ubiquitin-protein ligase that monoubiquitinates H2B to form H2BK143ub1. H2BK143ub1 gives a specific tag for epigenetic transcriptional activation and is also prerequisite for H3K4me and maybe H3K79me. It thereby plays a central role in histone code and gene regulation. Forms a ubiquitin ligase complex in cooperation with the E2 enzyme UBC2/RAD6. In Arabidopsis thaliana (Mouse-ear cress), this protein is E3 ubiquitin-protein ligase BRE1-like 2 (HUB2).